A 284-amino-acid polypeptide reads, in one-letter code: Probable protein phosphatase 2C 41 (284 aa).

The 248-residue stretch at 35–282 folds into the PPM-type phosphatase domain; the sequence is SYGFYLVRGM…DDISCVVVRF (248 aa). 4 residues coordinate Mn(2+): aspartate 72, glycine 73, aspartate 234, and aspartate 273.

The protein belongs to the PP2C family. It depends on Mg(2+) as a cofactor. The cofactor is Mn(2+).

The catalysed reaction is O-phospho-L-seryl-[protein] + H2O = L-seryl-[protein] + phosphate. It carries out the reaction O-phospho-L-threonyl-[protein] + H2O = L-threonyl-[protein] + phosphate. This chain is Probable protein phosphatase 2C 41, found in Oryza sativa subsp. japonica (Rice).